The primary structure comprises 1212 residues: MKSYGLSLTTAALGNEEKKMAAEKARGEGEEGSFSLTVEEKKALCGLDSSFFGFLTRCKDGAKMKTLLNKAIHFYESLIVKAEGKVESDFFCQLGHFNLLLEDYSKALSSYQRYYSLQTDYWKNAAFLYGLGLVYFYYNAFQWAIRAFQEVLYVDPNFCRAKEIHLRLGFMFKMNTDYESSLKHFQLALIDCNVCTLSSVEIQFHIAHLYETQRKYHSAKAAYEQLLQIESLPSQVKATVLQQLGWMHHNMDLIGDNTTKERYAIQYLQKSLEEDPNSGQSWYFLGRCYSCIGKVQDAFVSYRQSIDKSEASADTWCSIGVLYQQQNQPMDALQAYICAVQLDHGHAAAWMDLGILYESCNQPQDAIKCYLNAARSKSCNNTSALTSRIKFLQAQLCNLPQSSLQNKTKLLPSIEEAWSLPIPAELTSRQGAMNTAQQSVSDTWNSVQTASHHSVQQKVYTQCFTAQKLQSFGKDQQPPFQTGSTRYLQAASTNDQNQNGNHTLPQNSKGDAQNHFLRIPTSEEQKIINFTKESKDSRSKSLTSKTSRKDRDTSNICVNAKKHSNHIYQISSVPISSLNNKESVSPDLIIVDNPQLSVLVGETIDNVDHDIGTCNKVNNVHLAIHKKPDNLSASSPSSAISTETLSLKLTEQTHIVTSFISPHSGLHTINGEGHENLESSASVNVGLRPRSQIIPSMSVSIYSSSTEVLKACRSLGKNGLSNGHILLDICPPPRPPTSPYPPLPKEKLNPPTPSIYLENKRDAFFPPLHQFCINPKNPVTVIRGLAGALKLDLGLFSTKTLVEANNEHIVEVRTQLLQPADENWDPSGTKKIWRYENKSSHTTIAKYAQYQACSFQESLREENERRTQVKDYSDNESTCSDNSGRRQKAPFKTIKCGINIDLSDNKKWKLQLHELTKLPAFVRVVSAGNLLSHVGYTILGMNSVQLCMKVPGSRIPGHQENNNFCSVNINIGPGDCEWFVVPEDYWGVLNDFCEKNNLNFLMSSWWPNLEDLYEANVPVYRFIQRPGDLVWINAGTVHWVQAIGWCNNITWNVGPLTAFQYKLAVERYEWNKLQSVKSVVPMVHLSWNMARNIKVSDPKLFEMIKYCLLKILKHCQTLREALVAAGKEVLWHGRINDEPAPYCSICEVEVFNLLFVTNESNSQKTYIVHCQNCARKTSGNLENFVVLEQYKMEDLIQVYDQFTLAPSLSSAS.

TPR repeat units lie at residues 88-121 (SDFFCQLGHFNLLLEDYSKALSSYQRYYSLQTDY), 125-158 (AAFLYGLGLVYFYYNAFQWAIRAFQEVLYVDPNF), 165-193 (HLRLGFMFKMNTDYESSLKHFQLALIDCN), 200-233 (VEIQFHIAHLYETQRKYHSAKAAYEQLLQIESLP), 245-278 (GWMHHNMDLIGDNTTKERYAIQYLQKSLEEDPNS), 279-312 (GQSWYFLGRCYSCIGKVQDAFVSYRQSIDKSEAS), 313-346 (ADTWCSIGVLYQQQNQPMDALQAYICAVQLDHGH), and 347-380 (AAAWMDLGILYESCNQPQDAIKCYLNAARSKSCN). The segment covering 530 to 539 (FTKESKDSRS) has biased composition (basic and acidic residues). Residues 530–555 (FTKESKDSRSKSLTSKTSRKDRDTSN) are disordered. The residue at position 752 (T752) is a Phosphothreonine. A disordered region spans residues 865 to 886 (RRTQVKDYSDNESTCSDNSGRR). A JmjC domain is found at 907 to 1070 (KWKLQLHELT…YKLAVERYEW (164 aa)). The Fe cation site is built by H958, E960, and H1038. Residues C1143, C1146, C1170, and C1173 each coordinate Zn(2+).

This sequence belongs to the UTX family. In terms of assembly, binds TLE1 and TLE2. L-ascorbate serves as cofactor. It depends on Fe(2+) as a cofactor.

The protein localises to the nucleus. The enzyme catalyses N(6),N(6),N(6)-trimethyl-L-lysyl(27)-[histone H3] + 2 2-oxoglutarate + 2 O2 = N(6)-methyl-L-lysyl(27)-[histone H3] + 2 formaldehyde + 2 succinate + 2 CO2. Its function is as follows. Male-specific histone demethylase that catalyzes trimethylated 'Lys-27' (H3K27me3) demethylation in histone H3. Has relatively low KDM activity. This chain is Histone demethylase UTY (Uty), found in Mus musculus (Mouse).